The following is a 57-amino-acid chain: Cecropin-A (57 aa).

The first 21 residues, 1–21 (IFFFVFACLLALSAVSAAPEP), serve as a signal peptide directing secretion.

Belongs to the cecropin family.

The protein localises to the secreted. Its function is as follows. Cecropins have lytic and antibacterial activity against several Gram-positive and Gram-negative bacteria. This chain is Cecropin-A (CECA), found in Spodoptera litura (Asian cotton leafworm).